Here is a 531-residue protein sequence, read N- to C-terminus: Keratin, type II cytoskeletal 79 (531 aa).

Positions 1-12 (MRSSLSRQTFST) are enriched in polar residues. Positions 1 to 55 (MRSSLSRQTFSTKGGFSSNSASGGGGSRMRTSYSSVTMSRGSGGGGGVRSGSSSG) are disordered. The segment at 1-138 (MRSSLSRQTF…DPEIQRVRTQ (138 aa)) is head. Residues 28 to 40 (RMRTSYSSVTMSR) are compositionally biased toward low complexity. Residues 41-55 (GSGGGGGVRSGSSSG) are compositionally biased toward gly residues. A coil 1A region spans residues 139-174 (EREQIKTLNNKFASFIDKVRFLEQQNKVLETKWALL). In terms of domain architecture, IF rod spans 139 to 453 (EREQIKTLNN…KLLESEESRM (315 aa)). Positions 175–194 (QEQSQNTGVARSLEPFFENY) are linker 1. The segment at 195–286 (LSTLRRQLDT…QLFEMELSQV (92 aa)) is coil 1B. The segment at 287 to 310 (QTNVSDTNVILSMDNNRNLDLDSI) is linker 12. The interval 311 to 449 (IAEVKAQYEL…ATYRKLLESE (139 aa)) is coil 2. The tract at residues 450–531 (ESRMSGDCPS…TTVKTSSRRY (82 aa)) is tail.

It belongs to the intermediate filament family. Heterotetramer of two type I and two type II keratins.

This chain is Keratin, type II cytoskeletal 79 (Krt79), found in Mus musculus (Mouse).